Reading from the N-terminus, the 409-residue chain is MTSVGLAPVSGLRESSSHSVGVDRLPEEMNDMRIRDDKEIEAAIVDGNGTETGHIIVTTIGGRHGQPKQTISYMAERIVGQGSFGVVFQAKCLETGETVAIKKVLQDKRYKNRELQTMRLLDHPNVVCLKHCFFSTTEKDEVYLNLVLEYVPETVHRVIKHYNKLNQRMPLILVKLYTYQIFRALSYIHHTIGVCHRDIKPQNLLVNPHTHQVKLCDFGSAKVLVKGEPNISYICSRYYRAPELIFGATEYTTAIDIWSAGCVLAELLLGQPLFPGESGVDQLVEIIKVLGTPTREEIKCMNPNYNEFKFPQIKAHPWHKIFHKRMPPEAVDLVSRLLQYSPNLRCTALEAVTHAFFDELRDPNTRLPNGRVLPPLFNFKAHELKGVSAENLLKLVPEHARKQCPSLGL.

Residues 1-27 (MTSVGLAPVSGLRESSSHSVGVDRLPE) form a disordered region. One can recognise a Protein kinase domain in the interval 73–357 (YMAERIVGQG…ALEAVTHAFF (285 aa)). Residues 79-87 (VGQGSFGVV) and K102 contribute to the ATP site. The active-site Proton acceptor is D198.

The protein belongs to the protein kinase superfamily. CMGC Ser/Thr protein kinase family. GSK-3 subfamily. In terms of processing, autophosphorylated mainly on threonine and serine residues.

The enzyme catalyses L-seryl-[protein] + ATP = O-phospho-L-seryl-[protein] + ADP + H(+). It catalyses the reaction L-threonyl-[protein] + ATP = O-phospho-L-threonyl-[protein] + ADP + H(+). May mediate extracellular signals to regulate transcription in differentiating cells. The protein is Shaggy-related protein kinase NtK-1 (NTK-1) of Nicotiana tabacum (Common tobacco).